We begin with the raw amino-acid sequence, 111 residues long: Probable 4-amino-4-deoxy-L-arabinose-phosphoundecaprenol flippase subunit ArnE (111 aa).

Transmembrane regions (helical) follow at residues 38–58 (LWLG…LLVL), 61–81 (LPVG…TLAA), and 91–111 (PRHW…GSAA). The 70-residue stretch at 40-109 (LGLALICMGA…IISGIIILGS (70 aa)) folds into the EamA domain.

Belongs to the ArnE family. Heterodimer of ArnE and ArnF.

It is found in the cell inner membrane. It participates in bacterial outer membrane biogenesis; lipopolysaccharide biosynthesis. Its function is as follows. Translocates 4-amino-4-deoxy-L-arabinose-phosphoundecaprenol (alpha-L-Ara4N-phosphoundecaprenol) from the cytoplasmic to the periplasmic side of the inner membrane. In Salmonella newport (strain SL254), this protein is Probable 4-amino-4-deoxy-L-arabinose-phosphoundecaprenol flippase subunit ArnE.